Here is a 198-residue protein sequence, read N- to C-terminus: Recombination protein RecR (198 aa).

A C4-type zinc finger spans residues 58–73 (CSICGNYTDSDPCAIC). The Toprim domain maps to 81–175 (SIICVIEQPK…KVTRIAHGVP (95 aa)).

This sequence belongs to the RecR family.

Its function is as follows. May play a role in DNA repair. It seems to be involved in an RecBC-independent recombinational process of DNA repair. It may act with RecF and RecO. The polypeptide is Recombination protein RecR (Clostridium novyi (strain NT)).